A 248-amino-acid polypeptide reads, in one-letter code: Anamorsin homolog (248 aa).

An N-terminal SAM-like domain region spans residues 4-129 (FKGLQKSLYI…ETGSSARLSF (126 aa)). The segment at 130–161 (AKKNANAANVWKISGDDEELIDEEELLDEEDK) is linker. [2Fe-2S] cluster-binding residues include Cys-172, Cys-181, Cys-184, and Cys-186. Positions 172-186 (CSTTGKRKACKNCSC) are fe-S binding site A. 4 residues coordinate [4Fe-4S] cluster: Cys-209, Cys-212, Cys-220, and Cys-223. Short sequence motifs (cx2C motif) lie at residues 209 to 212 (CGNC) and 220 to 223 (CSTC). The fe-S binding site B stretch occupies residues 209–223 (CGNCYLGDAFRCSTC).

Belongs to the anamorsin family. Monomer. The cofactor is [2Fe-2S] cluster. [4Fe-4S] cluster is required as a cofactor.

It is found in the cytoplasm. The protein resides in the mitochondrion intermembrane space. Functionally, component of the cytosolic iron-sulfur (Fe-S) protein assembly (CIA) machinery. Required for the maturation of extramitochondrial Fe-S proteins. Part of an electron transfer chain functioning in an early step of cytosolic Fe-S biogenesis, facilitating the de novo assembly of a [4Fe-4S] cluster on the cytosolic Fe-S scaffold complex. Electrons are transferred from NADPH via a FAD- and FMN-containing diflavin oxidoreductase. Together with the diflavin oxidoreductase, also required for the assembly of the diferric tyrosyl radical cofactor of ribonucleotide reductase (RNR), probably by providing electrons for reduction during radical cofactor maturation in the catalytic small subunit. The polypeptide is Anamorsin homolog (Drosophila sechellia (Fruit fly)).